The primary structure comprises 218 residues: Redox-sensing transcriptional repressor Rex (218 aa).

Residues 25-64 (WYLSYVQLLHADGCESVSSTRIARAVGVDASLVAKDLSYV) constitute a DNA-binding region (H-T-H motif). Residue 99 to 104 (GVGSLG) coordinates NAD(+).

This sequence belongs to the transcriptional regulatory Rex family. Homodimer.

The protein localises to the cytoplasm. Functionally, modulates transcription in response to changes in cellular NADH/NAD(+) redox state. The protein is Redox-sensing transcriptional repressor Rex of Porphyromonas gingivalis (strain ATCC BAA-308 / W83).